Here is a 308-residue protein sequence, read N- to C-terminus: MNVIIKAVVTASTLLMVSFSSFETSAQSPLLKEQIESIVIGKKATVGVAVWGPDDLEPLLINPFEKFPMQSVFKLHLAMLVLHQVDQGKLDLNQTVIVNRAKVLQNTWAPIMKAYQGDEFSVPVQQLLQYSVSHSDNVACDLLFELVGGPAALHDYIQSMGIKETAVVANEAQMHADDQVQYQNWTSMKGAAEILKKFEQKTQLSETSQALLWKWMVETTTGPERLKGLLPAGTVVAHKTGTSGIKAGKTAATNDLGIILLPDGRPLLVAVFVKDSAESSRTNEAIIAQVAQTAYQFELKKLSALSPN.

The N-terminal stretch at 1-26 (MNVIIKAVVTASTLLMVSFSSFETSA) is a signal peptide. The active-site Nucleophile; acyl-ester intermediate is the S71. Residues K74, S135, and E171 each contribute to the a beta-lactam site.

It belongs to the class-A beta-lactamase family. In terms of assembly, monomer.

It localises to the secreted. It carries out the reaction a beta-lactam + H2O = a substituted beta-amino acid. Its activity is regulated as follows. Inhibited by the beta-lactamase-blocking agents clavulanic acid, tazobactam and sulbactam. Not inhibited by EDTA. Extended-spectrum beta-lactamase (ESBL) which confers resistance to penicillins, as well as first-, second- and third-generation cephalosporins, but not the carbapenem, imipenem, in the JM109 strain of E.coli. Has cefotaxime-hydrolyzing activity. This chain is Extended-spectrum beta-lactamase PER-1, found in Pseudomonas aeruginosa.